Reading from the N-terminus, the 427-residue chain is Tumor necrosis factor receptor superfamily member 16 (427 aa).

An N-terminal signal peptide occupies residues 1–31; sequence MRRAGAACSAMDRLRLLLLLLLLLGVSFGGA. The Extracellular segment spans residues 32–254; that stretch reads KETCSTGMYT…VVTRGTADNL (223 aa). TNFR-Cys repeat units lie at residues 34 to 67, 69 to 110, 111 to 149, and 151 to 191; these read TCSTGMYTHSGECCKACNLGEGVAQPCGANQTVC, PCLD…DAVC, RCSYGYYQDEETGRCEACSVCGVGSGLVFSCQDKQNTVC, and ECPE…DAEC. Disulfide bonds link Cys-35–Cys-46, Cys-47–Cys-60, Cys-50–Cys-67, Cys-70–Cys-86, Cys-89–Cys-102, Cys-92–Cys-110, Cys-112–Cys-125, Cys-128–Cys-141, Cys-131–Cys-149, Cys-152–Cys-167, Cys-170–Cys-183, and Cys-173–Cys-191. Asn-63 carries an N-linked (GlcNAc...) asparagine glycan. Residues 197-223 are disordered; it reads RWITRSTPPEGSDVTTPSTQEPEAPPE. The span at 200–217 shows a compositional bias: polar residues; that stretch reads TRSTPPEGSDVTTPSTQE. A helical transmembrane segment spans residues 255 to 275; it reads IPVYCSILAAVVVGLVAYIAF. The Cytoplasmic portion of the chain corresponds to 276–427; that stretch reads KRWNSCKQNK…CSESTATSPV (152 aa). Composition is skewed to polar residues over residues 284-294 and 308-329; these read NKQGANSRPVN and SGISVDSQSLHDQQTHTQTASG. The tract at residues 284–334 is disordered; it reads NKQGANSRPVNQTPPPEGEKLHSDSGISVDSQSLHDQQTHTQTASGQALKG. Phosphoserine is present on Ser-314. The mediates interaction with KIDINS220 stretch occupies residues 329-344; that stretch reads GQALKGDGNLYSSLPL. Residues 356 to 421 enclose the Death domain; it reads GDTWRHLAGE…DIVESLCSES (66 aa).

In terms of assembly, homodimer; disulfide-linked. Heterodimer with SORCS2. The extracellular domains of the heterodimer bind NGF. The cytoplasmic region of the heterodimer binds TRIO. NGF binding mediates dissociation of TRIO from the receptor complex. Interacts with TRAF2, TRAF4, TRAF6, PTPN13 and RANBP9. Interacts through TRAF6 with SQSTM1 which bridges NGFR to NTRK1. Interacts with BEX1. Interacts with BEX3. Interacts with KIDINS220 and NTRK1. Can form a ternary complex with NTRK1 and KIDINS220 and this complex is affected by the expression levels of KIDINS220. An increase in KIDINS220 expression leads to a decreased association of NGFR and NTRK1. Interacts (via death domain) with RAB31. Interacts with NTRK2; may regulate the ligand specificity of the NTRK2 receptor. Interacts with LINGO1. Interacts with NRADD. Interacts with MAGED1; the interaction antagonizes the association NGFR:NTRK1. Interacts with RTN4R. Interacts (via death domain) with ARHGDIA and RIPK2. Interacts with BFAR. As to quaternary structure, (Microbial infection) Binds to rabies virus glycoprotein Gs. Post-translationally, N-glycosylated. O-glycosylated. Phosphorylated on serine residues. In terms of tissue distribution, detected in Schwann cells. Detected in embryonic brain, in hippocampus neurons (at protein level). Detected in brain and spinal cord.

It localises to the cell membrane. The protein resides in the cytoplasm. Its subcellular location is the perikaryon. The protein localises to the cell projection. It is found in the growth cone. It localises to the dendritic spine. Functionally, low affinity neurotrophin receptor which can bind to mature NGF, BDNF, NTF3, and NTF4. Forms a heterodimeric receptor with SORCS2 that binds the precursor forms of NGF (proNGF), BDNF (proBDNF) and NTF3 (proNT3) with high affinity, and has much lower affinity for mature NGF and BDNF. Plays an important role in differentiation and survival of specific neuronal populations during development. Can mediate cell survival as well as cell death of neural cells. The heterodimeric receptor formed with SORCS2 plays a role in proBDNF-dependent synaptic plasticity, in hippocampal long term depression (LTD) and long term potentiation (LTP). Plays a role in the inactivation of RHOA. Plays a role in the regulation of the translocation of GLUT4 to the cell surface in adipocytes and skeletal muscle cells in response to insulin, probably by regulating RAB31 activity, and thereby contributes to the regulation of insulin-dependent glucose uptake. Necessary for the circadian oscillation of the clock genes BMAL1, PER1, PER2 and NR1D1 in the suprachiasmatic nucleus (SCN) of the brain and in liver and of the genes involved in glucose and lipid metabolism in the liver. (Microbial infection) Cell surface receptor for rabies virus glycoprotein Gs. In terms of biological role, does not bind NGF, BDNF, NTF3, and NTF4. The polypeptide is Tumor necrosis factor receptor superfamily member 16 (Ngfr) (Mus musculus (Mouse)).